Consider the following 296-residue polypeptide: Probable porphobilinogen deaminase (296 aa).

At Cys-241 the chain carries S-(dipyrrolylmethanemethyl)cysteine.

The protein belongs to the HMBS family. Dipyrromethane is required as a cofactor.

It carries out the reaction 4 porphobilinogen + H2O = hydroxymethylbilane + 4 NH4(+). Its pathway is porphyrin-containing compound metabolism; protoporphyrin-IX biosynthesis; coproporphyrinogen-III from 5-aminolevulinate: step 2/4. In terms of biological role, tetrapolymerization of the monopyrrole PBG into the hydroxymethylbilane pre-uroporphyrinogen in several discrete steps. This Pyrobaculum neutrophilum (strain DSM 2338 / JCM 9278 / NBRC 100436 / V24Sta) (Thermoproteus neutrophilus) protein is Probable porphobilinogen deaminase.